The sequence spans 391 residues: Na(+)/H(+) antiporter NhaA 1 (391 aa).

11 helical membrane passes run 19–39, 56–76, 98–118, 128–148, 157–177, 180–200, 208–228, 264–284, 297–317, 335–355, and 364–384; these read FLAS…AALI, VWLG…IFFL, ALPG…YIAI, GWAI…SLLG, VFLA…IAFF, SGLN…LIAL, LLPY…SGVH, VAFA…LSGI, VALG…VLAI, GVAI…NLAF, and EVKV…ILLL.

This sequence belongs to the NhaA Na(+)/H(+) (TC 2.A.33) antiporter family.

Its subcellular location is the cell inner membrane. The enzyme catalyses Na(+)(in) + 2 H(+)(out) = Na(+)(out) + 2 H(+)(in). Functionally, na(+)/H(+) antiporter that extrudes sodium in exchange for external protons. This Pseudomonas savastanoi pv. phaseolicola (strain 1448A / Race 6) (Pseudomonas syringae pv. phaseolicola (strain 1448A / Race 6)) protein is Na(+)/H(+) antiporter NhaA 1.